The following is a 438-amino-acid chain: 23S rRNA (uracil(1939)-C(5))-methyltransferase RlmD (438 aa).

The TRAM domain maps to 13-71 (KAPLGPMQTYLVEGLTHEAKGVARLNGKVTFIEGALPGETVTAQVNKPGRRFDEAVLNA). Residues Cys84, Cys90, Cys93, and Cys167 each coordinate [4Fe-4S] cluster. Residues Gln271, Phe300, Asn305, Glu321, Asp348, and Asp368 each coordinate S-adenosyl-L-methionine. The active-site Nucleophile is Cys394.

This sequence belongs to the class I-like SAM-binding methyltransferase superfamily. RNA M5U methyltransferase family. RlmD subfamily.

It catalyses the reaction uridine(1939) in 23S rRNA + S-adenosyl-L-methionine = 5-methyluridine(1939) in 23S rRNA + S-adenosyl-L-homocysteine + H(+). In terms of biological role, catalyzes the formation of 5-methyl-uridine at position 1939 (m5U1939) in 23S rRNA. The protein is 23S rRNA (uracil(1939)-C(5))-methyltransferase RlmD of Marinomonas posidonica (strain CECT 7376 / NCIMB 14433 / IVIA-Po-181).